Consider the following 447-residue polypeptide: Putative metabolite transport protein HI_0418 (447 aa).

The Cytoplasmic portion of the chain corresponds to M1–M28. Residues V29–F49 form a helical membrane-spanning segment. The Periplasmic portion of the chain corresponds to N50–Q63. The chain crosses the membrane as a helical span at residues I64–F84. At G85–T96 the chain is on the cytoplasmic side. A helical transmembrane segment spans residues F97–Y117. The Periplasmic portion of the chain corresponds to D118–S119. A helical transmembrane segment spans residues I120–G140. Residues G141–Q167 are Cytoplasmic-facing. The helical transmembrane segment at L168 to F188 threads the bilayer. The Periplasmic portion of the chain corresponds to G189 to T194. Residues E195–V215 form a helical membrane-spanning segment. Residues R216–P249 lie on the Cytoplasmic side of the membrane. The helical transmembrane segment at F250–F270 threads the bilayer. At S271–Q295 the chain is on the periplasmic side. A helical transmembrane segment spans residues I296–G316. Residues K317–R325 are Cytoplasmic-facing. A helical membrane pass occupies residues T326–L346. Topologically, residues E347 to L354 are periplasmic. The helical transmembrane segment at F355–F375 threads the bilayer. At L376–S390 the chain is on the cytoplasmic side. The chain crosses the membrane as a helical span at residues L391 to L411. Topologically, residues N412–K418 are periplasmic. A helical transmembrane segment spans residues G419–S439. At E440–S447 the chain is on the cytoplasmic side.

The protein belongs to the major facilitator superfamily. Metabolite:H+ Symporter (MHS) family (TC 2.A.1.6) family.

It is found in the cell inner membrane. The sequence is that of Putative metabolite transport protein HI_0418 from Haemophilus influenzae (strain ATCC 51907 / DSM 11121 / KW20 / Rd).